A 298-amino-acid polypeptide reads, in one-letter code: MTTHRPLFYGSITALITPMNNHGEVDFNALKKLVEYHIVSGTHAIVSVGTTGESATLSIAENVKTILKTLEFADGRIPIIAGTGANATSEAITMTKLLNDSGVAGCLSVVPYYNKPTQEGMYQHFKAIAECTDIPQILYNVPSRTGSDLLPETVGRLSQIANIVGIKEATGDVSRVAKIKQMAGEDFIFLSGDDATGLESMKLGGQGVISVTNNIAAADMAKMCELALAGKFDEAEIINDKLRALHKDLFIESNPIPVKWAAYKLGLVPDPILRLPLTTLSEQAQPKIINALKNAGLL.

Residue Thr-51 participates in pyruvate binding. Tyr-139 (proton donor/acceptor) is an active-site residue. The active-site Schiff-base intermediate with substrate is the Lys-167. Pyruvate is bound at residue Ile-209.

Belongs to the DapA family. Homotetramer; dimer of dimers.

It is found in the cytoplasm. The enzyme catalyses L-aspartate 4-semialdehyde + pyruvate = (2S,4S)-4-hydroxy-2,3,4,5-tetrahydrodipicolinate + H2O + H(+). The protein operates within amino-acid biosynthesis; L-lysine biosynthesis via DAP pathway; (S)-tetrahydrodipicolinate from L-aspartate: step 3/4. Functionally, catalyzes the condensation of (S)-aspartate-beta-semialdehyde [(S)-ASA] and pyruvate to 4-hydroxy-tetrahydrodipicolinate (HTPA). The sequence is that of 4-hydroxy-tetrahydrodipicolinate synthase from Histophilus somni (strain 129Pt) (Haemophilus somnus).